Reading from the N-terminus, the 500-residue chain is Cytochrome P450 11B3, mitochondrial (500 aa).

The N-terminal 24 residues, 1–24 (MALRVTADVWLARPWQCLHRTRAL), are a transit peptide targeting the mitochondrion. Cys447 serves as a coordination point for heme.

Belongs to the cytochrome P450 family. Requires heme as cofactor. As to expression, expressed in the adrenal cortex and in different brain tissues, including hippocampus, hypothalamus, cerebellum, cerebral cortex, and midbrain.

It localises to the mitochondrion membrane. The enzyme catalyses a steroid + 2 reduced [adrenodoxin] + O2 + 2 H(+) = an 11beta-hydroxysteroid + 2 oxidized [adrenodoxin] + H2O. The catalysed reaction is 21-hydroxyprogesterone + 2 reduced [adrenodoxin] + O2 + 2 H(+) = corticosterone + 2 oxidized [adrenodoxin] + H2O. It carries out the reaction 21-hydroxyprogesterone + 2 reduced [adrenodoxin] + O2 + 2 H(+) = 18-hydroxy-11-deoxycorticosterone + 2 oxidized [adrenodoxin] + H2O. It catalyses the reaction 21-hydroxyprogesterone + 2 reduced [adrenodoxin] + O2 + 2 H(+) = 19-hydroxy-11-deoxycorticosterone + 2 oxidized [adrenodoxin] + H2O. In terms of biological role, a cytochrome P450 monooxygenase involved in the biosynthesis of adrenal corticoids. Catalyzes the hydroxylation of steroids at 11beta, 18- or 19-positions, with preferred regioselectivity at 11beta and 18. Converts 11-deoxycorticosterone into corticosterone, 18-hydroxy-11-deoxycorticosterone, and/or 19-hydroxy-11-deoxycorticosterone, but not to 18-hydroxycorticosterone or aldosterone. Mechanistically, uses molecular oxygen inserting one oxygen atom into a substrate for hydroxylation and reducing the second into a water molecule. Two electrons are provided by NADPH via a two-protein mitochondrial transfer system comprising flavoprotein FDXR (adrenodoxin/ferredoxin reductase) and nonheme iron-sulfur protein FDX1 or FDX2 (adrenodoxin/ferredoxin). The protein is Cytochrome P450 11B3, mitochondrial (Cyp11b3) of Rattus norvegicus (Rat).